Here is a 327-residue protein sequence, read N- to C-terminus: Pantothenate kinase (327 aa).

105–112 (GSVAVGKS) serves as a coordination point for ATP.

It belongs to the prokaryotic pantothenate kinase family.

The protein resides in the cytoplasm. The catalysed reaction is (R)-pantothenate + ATP = (R)-4'-phosphopantothenate + ADP + H(+). It functions in the pathway cofactor biosynthesis; coenzyme A biosynthesis; CoA from (R)-pantothenate: step 1/5. The chain is Pantothenate kinase from Cutibacterium acnes (strain DSM 16379 / KPA171202) (Propionibacterium acnes).